The sequence spans 466 residues: Metaxin-1 (466 aa).

Low complexity predominate over residues 1-19 (MLLGGPPRSPRSGTSPKGP). The segment at 1 to 133 (MLLGGPPRSP…AVAGGGPRQG (133 aa)) is disordered. Over residues 20–36 (WSSTGHVQFGKSPQTWP) the composition is skewed to polar residues. Residues 90–110 (ARGPVPRSSAASRARRSLASP) show a composition bias toward low complexity. Residues K187, K190, K227, and K317 each participate in a glycyl lysine isopeptide (Lys-Gly) (interchain with G-Cter in ubiquitin) cross-link. Residues 421–441 (ILSVLAGLAAMVGYALLSGIV) traverse the membrane as a helical segment.

This sequence belongs to the metaxin family. In terms of assembly, interacts with MTX2/metaxin-2. Associates with the mitochondrial contact site and cristae organizing system (MICOS) complex, composed of at least MICOS10/MIC10, CHCHD3/MIC19, CHCHD6/MIC25, APOOL/MIC27, IMMT/MIC60, APOO/MIC23/MIC26 and QIL1/MIC13. This complex was also known under the names MINOS or MitOS complex. The MICOS complex associates with mitochondrial outer membrane proteins SAMM50, MTX1 and MTX2 (together described as components of the mitochondrial outer membrane sorting assembly machinery (SAM) complex) and DNAJC11, mitochondrial inner membrane protein TMEM11 and with HSPA9. The MICOS and SAM complexes together with DNAJC11 are part of a large protein complex spanning both membranes termed the mitochondrial intermembrane space bridging (MIB) complex. Interacts with ARMC1. Post-translationally, ubiquitinated by PRKN during mitophagy, leading to its degradation and enhancement of mitophagy. Deubiquitinated by USP30.

It localises to the membrane. Its subcellular location is the mitochondrion outer membrane. Involved in transport of proteins into the mitochondrion. Essential for embryonic development. This chain is Metaxin-1 (MTX1), found in Homo sapiens (Human).